A 218-amino-acid chain; its full sequence is Serine/threonine-protein phosphatase 2 (218 aa).

Mn(2+) contacts are provided by D22, H24, D51, and N77. The Proton donor role is filled by H78. Position 187 (H187) interacts with Mn(2+).

The protein belongs to the PPP phosphatase family. It depends on Mn(2+) as a cofactor.

It catalyses the reaction O-phospho-L-seryl-[protein] + H2O = L-seryl-[protein] + phosphate. The enzyme catalyses O-phospho-L-threonyl-[protein] + H2O = L-threonyl-[protein] + phosphate. In terms of biological role, has been shown, in vitro, to act on Ser, Thr and Tyr-phosphorylated substrates. The chain is Serine/threonine-protein phosphatase 2 (pphB) from Escherichia coli (strain K12).